The sequence spans 242 residues: Dihydropteridine reductase (242 aa).

Residue 12–36 coordinates NADP(+); that stretch reads LVYGGRGALGSRCVQAFRARNWWVA. 4 positions are modified to N6-succinyllysine: Lys71, Lys77, Lys94, and Lys100. Residue Tyr148 is the Proton acceptor of the active site.

Belongs to the short-chain dehydrogenases/reductases (SDR) family. Homodimer.

The catalysed reaction is 5,6,7,8-tetrahydropteridine + NAD(+) = 6,7-dihydropteridine + NADH + H(+). It catalyses the reaction 5,6,7,8-tetrahydropteridine + NADP(+) = 6,7-dihydropteridine + NADPH + H(+). Its function is as follows. Catalyzes the conversion of quinonoid dihydrobiopterin into tetrahydrobiopterin. This Bos taurus (Bovine) protein is Dihydropteridine reductase (QDPR).